The chain runs to 244 residues: Cell division protein DivIB (244 aa).

Over 1-6 (MKIKWP) the chain is Cytoplasmic. Residues 7–27 (LQLWISLAVFVTIAVGTLLLL) traverse the membrane as a helical segment. The region spanning 28–104 (QPWQTIKTVT…IDIAEKVTAG (77 aa)) is the POTRA domain. The Extracellular segment spans residues 28–244 (QPWQTIKTVT…KADNKAHQKQ (217 aa)).

Belongs to the FtsQ/DivIB family. DivIB subfamily.

Its subcellular location is the cell membrane. Cell division protein that may be involved in stabilizing or promoting the assembly of the division complex. The protein is Cell division protein DivIB of Leuconostoc kimchii (strain IMSNU 11154 / KCTC 2386 / IH25).